Here is a 1734-residue protein sequence, read N- to C-terminus: Complement C4-A (1734 aa).

The signal sequence occupies residues 1 to 19 (MRLLWGLAWVFSFCASSLQ). Cysteine 66 and cysteine 95 are disulfide-bonded. An N-linked (GlcNAc...) asparagine glycan is attached at asparagine 224. An intrachain disulfide couples cysteine 633 to cysteine 667. Residues 674–677 (RQKR) constitute a propeptide that is removed on maturation. 3 cysteine pairs are disulfide-bonded: cysteine 700–cysteine 726, cysteine 701–cysteine 733, and cysteine 714–cysteine 734. An Anaphylatoxin-like domain is found at 700 to 734 (CCQDGMTKLPMKRTCEQRAARVPQQACREPFLSCC). N-linked (GlcNAc...) asparagine glycosylation is found at asparagine 743 and asparagine 859. The isoglutamyl cysteine thioester (Cys-Gln) cross-link spans 1002-1005 (CAEQ). 2 N-linked (GlcNAc...) asparagine glycosylation sites follow: asparagine 1128 and asparagine 1383. Tyrosine 1409 is subject to Sulfotyrosine. Residues 1437–1443 (RRSRRRR) constitute a propeptide that is removed on maturation. Cystine bridges form between cysteine 1461-cysteine 1525, cysteine 1573-cysteine 1578, cysteine 1585-cysteine 1663, cysteine 1608-cysteine 1732, and cysteine 1708-cysteine 1717. The region spanning 1585–1732 (CPRLLRSLER…FLMEFSSRGC (148 aa)) is the NTR domain.

As to quaternary structure, in absence of complement activation, circulates in blood as a disulfide-linked trimer of an alpha, beta and gamma chain. Complement C4b is composed of Complement C4b-A, Complement C4 beta and Complement C4 gamma chains that are associated via disulfide bonds. Non-enzymatic component of the C3 convertase, also named C4bC2b, composed of the serine protease complement C2b (C2), as well as complement C4b. Non-enzymatic component of the C5 convertase, also named C4bC2bC3b, composed of the serine protease complement C2b (C2), complement C3b, as well as complement C4b. Post-translationally, prior to secretion, the single-chain precursor is enzymatically cleaved by plasminogen (PLG) to yield non-identical chains alpha, beta and gamma. During activation of the complement systems, the alpha chain is cleaved into C4a and C4b by different proteases depending on the complement pathway: C4b stays linked to the beta and gamma chains, while C4a is released in the plasma. The alpha chain is cleaved by C1S to generate C4a and C4b following activation by the classical complement system. The alpha chain is cleaved to generate C4a and C4b by MASP2 following activation by the lectin complement system. The alpha chain is cleaved by GZMK to generate C4a and C4b following activation by the GZMK complement system. Further degradation of C4b by C1 into the inactive fragments C4c and C4d blocks the generation of C3 convertase. The proteolytic cleavages often are incomplete so that many structural forms can be found in plasma. In terms of processing, upon activation, the internal thioester bond reacts with carbohydrate antigens on the target surface to form amide or ester bonds, leading to covalent association with the surface of pathogens. Complement C4b interacts with complement C3b via a thioester linkage. Post-translationally, N- and O-glycosylated. O-glycosylated with a core 1 or possibly core 8 glycan.

Its subcellular location is the secreted. It is found in the synapse. The protein localises to the cell projection. The protein resides in the axon. It localises to the dendrite. Its subcellular location is the cell surface. With respect to regulation, specifically inhibited by nanobody hC4Nb8, inhibiting the classical complement pathway. Precursor of non-enzymatic components of the classical, lectin and GZMK complement pathways, which consist in a cascade of proteins that leads to phagocytosis and breakdown of pathogens and signaling that strengthens the adaptive immune system. Functionally, non-enzymatic component of C3 and C5 convertases. Generated following cleavage by complement proteases (C1S, MASP2 or GZMK, depending on the complement pathway), it covalently attaches to the surface of pathogens, where it acts as an opsonin that marks the surface of antigens for removal. It then recruits the serine protease complement C2b to form the C3 and C5 convertases, which cleave and activate C3 and C5, respectively, the next components of the complement pathways. Complement C4b-A isotype is responsible for effective binding to form amide bonds with immune aggregates or protein antigens, while complement C4b-B isotype catalyzes the transacylation of the thioester carbonyl group to form ester bonds with carbohydrate antigens. In terms of biological role, putative humoral mediator released following cleavage by complement proteases (C1S, MASP2 or GZMK, depending on the complement pathway). While it is strongly similar to anaphylatoxins, its role is unclear. Was reported to act as a mediator of local inflammatory process; however these effects were probably due to contamination with C3a and/C5a anaphylatoxins in biological assays. The chain is Complement C4-A from Mus musculus (Mouse).